A 316-amino-acid chain; its full sequence is Conjugated bile acid hydrolase (316 aa).

Residue cysteine 2 is the Nucleophile of the active site. Deoxycholate-binding residues include cysteine 2 and arginine 18. Asparagine 81 contacts taurine.

It belongs to the peptidase C59 family.

It catalyses the reaction cholate + taurine = taurocholate + H2O. It carries out the reaction taurochenodeoxycholate + H2O = chenodeoxycholate + taurine. The catalysed reaction is taurodeoxycholate + H2O = deoxycholate + taurine. The enzyme catalyses glycocholate + H2O = cholate + glycine. It catalyses the reaction glycodeoxycholate + H2O = deoxycholate + glycine. The protein operates within lipid metabolism; bile acid biosynthesis. In terms of biological role, bile salt hydrolase that catalyzes the deconjugation of glycine- and taurine-linked bile salts, which occurs naturally in the intestines of humans, releasing amino acid residues and deconjugated bile salts (bile acids). Can hydrolyze the amide bond in the bile salts taurocholate (TCA), taurodeoxycholate (TDCA), taurochenodeoxycholate (TCDCA), glycocholate (GCA) and glycodeoxycholate (GDCA). Shows highest activity toward the taurine-conjugated bile salts TCA and TCDCA. The activity toward the other three substrates (TDCA, GCA and GDCA) is relatively low. This enzyme likely contributes to bile salt resistance of the strain and may be associated with survival capability of strain JCM1131 within the human intestine by bile detoxification. The sequence is that of Conjugated bile acid hydrolase from Lactobacillus gasseri (strain ATCC 33323 / DSM 20243 / BCRC 14619 / CIP 102991 / JCM 1131 / KCTC 3163 / NCIMB 11718 / NCTC 13722 / AM63).